Reading from the N-terminus, the 64-residue chain is Fatty acid synthase (64 aa).

In terms of domain architecture, Carrier spans 1 to 64 (AEGEGQRDLL…VLSMREVRQL (64 aa)). An O-(pantetheine 4'-phosphoryl)serine; alternate modification is found at Ser38. Ser38 carries the phosphoserine; alternate modification.

As to quaternary structure, homodimer which is arranged in a head to tail fashion. Interacts with CEACAM1; this interaction is insulin and phosphorylation-dependent; reduces fatty-acid synthase activity.

The protein localises to the cytoplasm. The protein resides in the melanosome. The enzyme catalyses acetyl-CoA + n malonyl-CoA + 2n NADPH + 2n H(+) = a long-chain fatty acid + (n+1) CoA + n CO2 + 2n NADP(+).. In terms of biological role, fatty acid synthetase catalyzes the formation of long-chain fatty acids from acetyl-CoA, malonyl-CoA and NADPH. This multifunctional protein has 7 catalytic activities as an acyl carrier protein. The protein is Fatty acid synthase (FASN) of Oryctolagus cuniculus (Rabbit).